The primary structure comprises 147 residues: Putative protein CLUHP3 (147 aa).

A disordered region spans residues 14–47; sequence KEPEGGRRRLSHPGNMGWMRPSQETTPPDRSHHS.

The sequence is that of Putative protein CLUHP3 (CLUHP3) from Homo sapiens (Human).